Reading from the N-terminus, the 353-residue chain is Methylthioribose-1-phosphate isomerase (353 aa).

Substrate-binding positions include 51–53 (RGA), R94, and Q199. D240 functions as the Proton donor in the catalytic mechanism. 250–251 (NK) is a binding site for substrate.

This sequence belongs to the eIF-2B alpha/beta/delta subunits family. MtnA subfamily. Homodimer.

It carries out the reaction 5-(methylsulfanyl)-alpha-D-ribose 1-phosphate = 5-(methylsulfanyl)-D-ribulose 1-phosphate. It participates in amino-acid biosynthesis; L-methionine biosynthesis via salvage pathway; L-methionine from S-methyl-5-thio-alpha-D-ribose 1-phosphate: step 1/6. Its function is as follows. Catalyzes the interconversion of methylthioribose-1-phosphate (MTR-1-P) into methylthioribulose-1-phosphate (MTRu-1-P). In Bacillus pumilus (strain SAFR-032), this protein is Methylthioribose-1-phosphate isomerase.